Consider the following 63-residue polypeptide: Large ribosomal subunit protein bL28 (63 aa).

It belongs to the bacterial ribosomal protein bL28 family.

In Sulfurihydrogenibium sp. (strain YO3AOP1), this protein is Large ribosomal subunit protein bL28.